A 102-amino-acid chain; its full sequence is Iron-sulfur cluster assembly protein CyaY (102 aa).

The protein belongs to the frataxin family.

In terms of biological role, involved in iron-sulfur (Fe-S) cluster assembly. May act as a regulator of Fe-S biogenesis. This Histophilus somni (strain 2336) (Haemophilus somnus) protein is Iron-sulfur cluster assembly protein CyaY.